A 57-amino-acid polypeptide reads, in one-letter code: uncharacterized protein (57 aa).

The chain crosses the membrane as a helical span at residues 34–54; it reads AALLDAAALVVIPGLLTAAAV.

The protein localises to the membrane. This is an uncharacterized protein from Dictyostelium discoideum (Social amoeba).